Here is a 229-residue protein sequence, read N- to C-terminus: Octanoyltransferase (229 aa).

A BPL/LPL catalytic domain is found at 30 to 223 (PDTPDTIWLV…QLQQRAQAHP (194 aa)). Substrate-binding positions include 69-76 (RGGQITYH), 141-143 (ALG), and 154-156 (GVS). The active-site Acyl-thioester intermediate is Cys172.

This sequence belongs to the LipB family.

It is found in the cytoplasm. It catalyses the reaction octanoyl-[ACP] + L-lysyl-[protein] = N(6)-octanoyl-L-lysyl-[protein] + holo-[ACP] + H(+). It participates in protein modification; protein lipoylation via endogenous pathway; protein N(6)-(lipoyl)lysine from octanoyl-[acyl-carrier-protein]: step 1/2. In terms of biological role, catalyzes the transfer of endogenously produced octanoic acid from octanoyl-acyl-carrier-protein onto the lipoyl domains of lipoate-dependent enzymes. Lipoyl-ACP can also act as a substrate although octanoyl-ACP is likely to be the physiological substrate. The sequence is that of Octanoyltransferase from Ralstonia pickettii (strain 12J).